Consider the following 1374-residue polypeptide: Y' element ATP-dependent helicase YLL066C (1374 aa).

The tract at residues 321 to 345 is disordered; it reads AGEAASSDHDQKISRVTRKRPREPK. Residues 375-552 enclose the Helicase ATP-binding domain; it reads EIYMADTPSV…LQRIGLTGLA (178 aa). 388-395 is a binding site for ATP; the sequence is APPGYGKT. A DEAH box motif is present at residues 498–501; the sequence is DEFH. In terms of domain architecture, Helicase C-terminal spans 609–758; it reads KLLLALFEIE…EFYGLESKKG (150 aa). A compositionally biased stretch (low complexity) spans 832 to 975; the sequence is ANASTNATTN…ATTTESTNAS (144 aa). The interval 832-999 is disordered; it reads ANASTNATTN…RFHPVTDINK (168 aa). Over residues 976 to 999 the composition is skewed to basic and acidic residues; sequence AKEDANKDGNAEDNRFHPVTDINK.

The protein belongs to the helicase family. Yeast subtelomeric Y' repeat subfamily.

Its function is as follows. Catalyzes DNA unwinding and is involved in telomerase-independent telomere maintenance. This chain is Y' element ATP-dependent helicase YLL066C, found in Saccharomyces cerevisiae (strain ATCC 204508 / S288c) (Baker's yeast).